A 156-amino-acid polypeptide reads, in one-letter code: Small ribosomal subunit protein bS16 (156 aa).

Residues 85-120 (GESGAEGTLKSKSEKEAFVAPERDSVILPEEPKQEE) show a composition bias toward basic and acidic residues. The disordered stretch occupies residues 85-156 (GESGAEGTLK…APAEDAEKSE (72 aa)). A compositionally biased stretch (acidic residues) spans 132–150 (PAEEAAEAPAEEAAEAPAE).

Belongs to the bacterial ribosomal protein bS16 family.

The sequence is that of Small ribosomal subunit protein bS16 from Micrococcus luteus (strain ATCC 4698 / DSM 20030 / JCM 1464 / CCM 169 / CCUG 5858 / IAM 1056 / NBRC 3333 / NCIMB 9278 / NCTC 2665 / VKM Ac-2230) (Micrococcus lysodeikticus).